A 210-amino-acid chain; its full sequence is Large ribosomal subunit protein uL4 (210 aa).

It belongs to the universal ribosomal protein uL4 family. As to quaternary structure, part of the 50S ribosomal subunit.

One of the primary rRNA binding proteins, this protein initially binds near the 5'-end of the 23S rRNA. It is important during the early stages of 50S assembly. It makes multiple contacts with different domains of the 23S rRNA in the assembled 50S subunit and ribosome. Functionally, forms part of the polypeptide exit tunnel. In Orientia tsutsugamushi (strain Boryong) (Rickettsia tsutsugamushi), this protein is Large ribosomal subunit protein uL4.